Reading from the N-terminus, the 163-residue chain is NADH-quinone oxidoreductase subunit I (163 aa).

4Fe-4S ferredoxin-type domains follow at residues 54 to 84 (LRRYPNGEERCIACKLCEAVCPALAITIESD) and 94 to 123 (TRYDIDLTKCIFCGFCEEACPVDAIVETQI). The [4Fe-4S] cluster site is built by Cys64, Cys67, Cys70, Cys74, Cys103, Cys106, Cys109, and Cys113.

It belongs to the complex I 23 kDa subunit family. As to quaternary structure, NDH-1 is composed of 14 different subunits. Subunits NuoA, H, J, K, L, M, N constitute the membrane sector of the complex. The cofactor is [4Fe-4S] cluster.

It is found in the cell inner membrane. It carries out the reaction a quinone + NADH + 5 H(+)(in) = a quinol + NAD(+) + 4 H(+)(out). Its function is as follows. NDH-1 shuttles electrons from NADH, via FMN and iron-sulfur (Fe-S) centers, to quinones in the respiratory chain. The immediate electron acceptor for the enzyme in this species is believed to be ubiquinone. Couples the redox reaction to proton translocation (for every two electrons transferred, four hydrogen ions are translocated across the cytoplasmic membrane), and thus conserves the redox energy in a proton gradient. This Cupriavidus necator (strain ATCC 17699 / DSM 428 / KCTC 22496 / NCIMB 10442 / H16 / Stanier 337) (Ralstonia eutropha) protein is NADH-quinone oxidoreductase subunit I.